The sequence spans 250 residues: 5-oxoprolinase subunit A (250 aa).

This sequence belongs to the LamB/PxpA family. In terms of assembly, forms a complex composed of PxpA, PxpB and PxpC.

The enzyme catalyses 5-oxo-L-proline + ATP + 2 H2O = L-glutamate + ADP + phosphate + H(+). In terms of biological role, catalyzes the cleavage of 5-oxoproline to form L-glutamate coupled to the hydrolysis of ATP to ADP and inorganic phosphate. The polypeptide is 5-oxoprolinase subunit A (Streptomyces coelicolor (strain ATCC BAA-471 / A3(2) / M145)).